Here is a 370-residue protein sequence, read N- to C-terminus: tRNA-specific 2-thiouridylase MnmA (370 aa).

Residues 12–19 (GMSGGVDS) and leucine 38 contribute to the ATP site. Catalysis depends on cysteine 105, which acts as the Nucleophile. An intrachain disulfide couples cysteine 105 to cysteine 204. ATP is bound at residue glycine 129. Residues 153 to 155 (KDQ) form an interaction with tRNA region. Catalysis depends on cysteine 204, which acts as the Cysteine persulfide intermediate. The segment at 310–311 (RY) is interaction with tRNA.

Belongs to the MnmA/TRMU family.

The protein resides in the cytoplasm. It carries out the reaction S-sulfanyl-L-cysteinyl-[protein] + uridine(34) in tRNA + AH2 + ATP = 2-thiouridine(34) in tRNA + L-cysteinyl-[protein] + A + AMP + diphosphate + H(+). Catalyzes the 2-thiolation of uridine at the wobble position (U34) of tRNA, leading to the formation of s(2)U34. The polypeptide is tRNA-specific 2-thiouridylase MnmA (Desulfitobacterium hafniense (strain Y51)).